The sequence spans 248 residues: Triosephosphate isomerase (248 aa).

9 to 11 (NWK) contacts substrate. H94 serves as the catalytic Electrophile. Catalysis depends on E166, which acts as the Proton acceptor. Residues G172, S211, and 232–233 (GG) each bind substrate.

This sequence belongs to the triosephosphate isomerase family. Homodimer.

Its subcellular location is the cytoplasm. It carries out the reaction D-glyceraldehyde 3-phosphate = dihydroxyacetone phosphate. The protein operates within carbohydrate biosynthesis; gluconeogenesis. Its pathway is carbohydrate degradation; glycolysis; D-glyceraldehyde 3-phosphate from glycerone phosphate: step 1/1. Its function is as follows. Involved in the gluconeogenesis. Catalyzes stereospecifically the conversion of dihydroxyacetone phosphate (DHAP) to D-glyceraldehyde-3-phosphate (G3P). This is Triosephosphate isomerase from Herminiimonas arsenicoxydans.